The following is a 347-amino-acid chain: Twinfilin-2 (347 aa).

ADF-H domains lie at 3 to 137 and 175 to 311; these read LVLV…RHIT and GLAF…DEVH. Residues 314 to 347 form a disordered region; sequence QHAHKQAFAKPRGPAGKRGNKRLIKGGGENGGNS. Residues 338–347 are compositionally biased toward gly residues; that stretch reads KGGGENGGNS.

The protein belongs to the actin-binding proteins ADF family. Twinfilin subfamily. Interacts with G-actin; ADP-actin form and capping protein (CP).

It is found in the cytoplasm. The protein localises to the cytoskeleton. It localises to the perinuclear region. Actin-binding protein involved in motile and morphological processes. Inhibits actin polymerization, likely by sequestering G-actin. The protein is Twinfilin-2 (twf2) of Danio rerio (Zebrafish).